Reading from the N-terminus, the 1402-residue chain is Transcription elongation factor spt-6 (1402 aa).

The interval methionine 1–threonine 199 is disordered. 4 stretches are compositionally biased toward acidic residues: residues aspartate 10–alanine 28, aspartate 40–glutamate 52, isoleucine 62–aspartate 75, and glutamate 90–leucine 102. Basic and acidic residues predominate over residues histidine 123–leucine 135. Residues aspartate 161–glutamate 176 show a composition bias toward acidic residues. Residues glutamate 177–threonine 199 show a composition bias toward basic and acidic residues. The region spanning glycine 1094–arginine 1161 is the S1 motif domain. The SH2 domain maps to proline 1209–aspartate 1306.

This sequence belongs to the SPT6 family.

It is found in the nucleus. The protein resides in the chromosome. Histone H3-H4 chaperone that plays a role in maintenance of chromatin structure during RNA polymerase II transcription elongation thereby repressing transcription initiation from cryptic promoters. Mediates the reassembly of nucleosomes onto the promoters of at least a selected set of genes during repression; the nucleosome reassembly is essential for transcriptional repression. Essential for viability. This Neurospora crassa (strain ATCC 24698 / 74-OR23-1A / CBS 708.71 / DSM 1257 / FGSC 987) protein is Transcription elongation factor spt-6 (spt-6).